The sequence spans 422 residues: MNPLTIFCLVAVLLSAATAHRGSNAIRNNLQPSGXLSPRELEDMPAINEITFEKLQEMPAEEAADLVNKIYHLSQMSRNIEPSYAPSPNQIPAYTYTPTGQRVNFNLNQLVATAQQQPNFGKQEVTVFITGLPNKSSAMLTANQKLVQAYLQAYNGRVQVQGEQGDDSNQDTSSSEESSNRPNGQQPKPNGNLVVIDLGAVIRNFEDLVLLDINRVGAAIGNSLVQLTAQADVPQEVINIVAQGIAAHVAGAAARQYTRQTGNTLRRITAMDPSKIYARKPNTLVGLARGNADFVDAIHTSAYGLGTTTRAGDVDFYPNGPSVNMPGTDDIIEASLRATRYLAETVLPGNDRNFPAVAAESLQQYKNNNGNGRRAYMGIAADYDLEGDYILQVNAKSPFGKSAPAQKQNSYHGIHQGAGRPN.

The first 20 residues, 1–20 (MNPLTIFCLVAVLLSAATAH), serve as a signal peptide directing secretion. Disordered stretches follow at residues 161–191 (QGEQ…KPNG) and 399–422 (FGKS…GRPN). Polar residues predominate over residues 180-189 (NRPNGQQPKP).

The protein belongs to the AB hydrolase superfamily. Lipase family. Synthesized in the fat body and ovarian follicle cells and accumulate in the oocyte.

The protein resides in the secreted. Vitellogenin is the major yolk protein of eggs where it is used as a food source during embryogenesis. This Ceratitis capitata (Mediterranean fruit fly) protein is Vitellogenin-2 (VG2-delta).